The following is a 287-amino-acid chain: ATP synthase gamma chain (287 aa).

It belongs to the ATPase gamma chain family. As to quaternary structure, F-type ATPases have 2 components, CF(1) - the catalytic core - and CF(0) - the membrane proton channel. CF(1) has five subunits: alpha(3), beta(3), gamma(1), delta(1), epsilon(1). CF(0) has three main subunits: a, b and c.

The protein localises to the cell inner membrane. Its function is as follows. Produces ATP from ADP in the presence of a proton gradient across the membrane. The gamma chain is believed to be important in regulating ATPase activity and the flow of protons through the CF(0) complex. The protein is ATP synthase gamma chain of Klebsiella pneumoniae subsp. pneumoniae (strain ATCC 700721 / MGH 78578).